Reading from the N-terminus, the 1400-residue chain is DNA-directed RNA polymerase subunit beta' (1400 aa).

Zn(2+) contacts are provided by Cys70, Cys72, Cys85, and Cys88. Mg(2+)-binding residues include Asp460, Asp462, and Asp464. Zn(2+) is bound by residues Cys814, Cys888, Cys895, and Cys898.

Belongs to the RNA polymerase beta' chain family. In terms of assembly, the RNAP catalytic core consists of 2 alpha, 1 beta, 1 beta' and 1 omega subunit. When a sigma factor is associated with the core the holoenzyme is formed, which can initiate transcription. The cofactor is Mg(2+). It depends on Zn(2+) as a cofactor.

It carries out the reaction RNA(n) + a ribonucleoside 5'-triphosphate = RNA(n+1) + diphosphate. In terms of biological role, DNA-dependent RNA polymerase catalyzes the transcription of DNA into RNA using the four ribonucleoside triphosphates as substrates. The polypeptide is DNA-directed RNA polymerase subunit beta' (Vibrio vulnificus (strain CMCP6)).